A 276-amino-acid polypeptide reads, in one-letter code: MADLQTEIEAAWEARADISAATTGPVRTAVDEALRLLDSGEARVAEKIDGEWFTHQWLKKAVLLSFRLNPNTVMRSGALGGGVGPWWDKVPNKFDGWDAPQFEAGGFRAVPGAIVRRGAHIGKNVILMPSFVNIGGYVDEGTMVDTWVTVGSCAQIGKNVHLSGGVGIGGVLEPLQANPTIIEDNCFIGARSEVVEGVVVGEGSVLSMGVFISASTKIVDRKTGAVHIGKVPPYSVVVPGNLPDPNGGPGLYCAVIVKTVDAQTRSKTSINDLLRD.

Residues arginine 108 and aspartate 145 each coordinate substrate.

Belongs to the transferase hexapeptide repeat family. As to quaternary structure, homotrimer.

The protein resides in the cytoplasm. The catalysed reaction is (S)-2,3,4,5-tetrahydrodipicolinate + succinyl-CoA + H2O = (S)-2-succinylamino-6-oxoheptanedioate + CoA. It participates in amino-acid biosynthesis; L-lysine biosynthesis via DAP pathway; LL-2,6-diaminopimelate from (S)-tetrahydrodipicolinate (succinylase route): step 1/3. This Caulobacter vibrioides (strain ATCC 19089 / CIP 103742 / CB 15) (Caulobacter crescentus) protein is 2,3,4,5-tetrahydropyridine-2,6-dicarboxylate N-succinyltransferase.